The chain runs to 309 residues: MLRAPGSDAPPTLSVRIAAAAGAACLADMITFPLDTAKVRLQIQGEGQGQPPRAPRYRGVLGTVATLARTEGLQKLYSGLPAGLQRQVGFASLRIGLYDSVREWLSPGQGAAASLGSRISAGVMTGGAAVFIGQPTEVVKVRLQAQSHLHGRKPRYTGTYNAYRIIATTEGLTGLWKGTTPNLMRNVIINCTELVTYDLMKEALVKNHLLADDLPCHFLSALVAGFCTTVLSSPVDVVKTRFVNSVPEQYTSVPNCAMTMLTKEGPLAFFKGFVPSFLRLGSWNVIMFVCFEQLKRELMKSGRTVDCAT.

At 1–10 (MLRAPGSDAP) the chain is on the mitochondrial intermembrane side. Residues 11–32 (PTLSVRIAAAAGAACLADMITF) form a helical membrane-spanning segment. Solcar repeat units follow at residues 11 to 104 (PTLS…VREW), 113 to 203 (ASLG…MKEA), and 212 to 297 (DDLP…LKRE). The Mitochondrial matrix segment spans residues 33-75 (PLDTAKVRLQIQGEGQGQPPRAPRYRGVLGTVATLARTEGLQK). Arg-58 is a fatty acid 16:0 binding site. The chain crosses the membrane as a helical span at residues 76 to 98 (LYSGLPAGLQRQVGFASLRIGLY). The Mitochondrial intermembrane portion of the chain corresponds to 99 to 118 (DSVREWLSPGQGAAASLGSR). A helical membrane pass occupies residues 119–135 (ISAGVMTGGAAVFIGQP). The Mitochondrial matrix segment spans residues 136–180 (TEVVKVRLQAQSHLHGRKPRYTGTYNAYRIIATTEGLTGLWKGTT). Residues 181–197 (PNLMRNVIINCTELVTY) form a helical membrane-spanning segment. At 198–214 (DLMKEALVKNHLLADDL) the chain is on the mitochondrial intermembrane side. The chain crosses the membrane as a helical span at residues 215 to 234 (PCHFLSALVAGFCTTVLSSP). The Mitochondrial matrix segment spans residues 235–268 (VDVVKTRFVNSVPEQYTSVPNCAMTMLTKEGPLA). Residue Cys-256 is modified to Cysteine sulfenic acid (-SOH). The chain crosses the membrane as a helical span at residues 269–291 (FFKGFVPSFLRLGSWNVIMFVCF). Lys-271 lines the fatty acid 16:0 pocket. Residues 292 to 309 (EQLKRELMKSGRTVDCAT) lie on the Mitochondrial intermembrane side of the membrane.

Belongs to the mitochondrial carrier (TC 2.A.29) family. In terms of assembly, most probably functions as a monomer. Binds one purine nucleotide per monomer. However, has also been suggested to function as a homodimer or a homotetramer. Tightly associates with cardiolipin in the mitochondrion inner membrane; may stabilize and regulate its activity. In terms of processing, may undergo sulfenylation upon cold exposure. May increase the sensitivity of UCP1 thermogenic function to the activation by noradrenaline probably through structural effects. Post-translationally, may undergo ubiquitin-mediated proteasomal degradation.

It is found in the mitochondrion inner membrane. The catalysed reaction is H(+)(in) = H(+)(out). With respect to regulation, has no constitutive proton transporter activity and has to be activated by long-chain fatty acids/LCFAs. Inhibited by purine nucleotides. Both purine nucleotides and LCFAs bind the cytosolic side of the transporter and directly compete to activate or inhibit it. Activated by noradrenaline and reactive oxygen species. Despite lacking canonical translational encoding for selenocysteine, a small pool of the protein has been observed to selectively incorporate selenocysteine at 'Cys-256'. Selenocysteine-modified protein is highly sensitive to redox modification and may constitute a pool of protein highly sensitive to activation by elevated levels of reactive oxygen species (ROS). In terms of biological role, mitochondrial protein responsible for thermogenic respiration, a specialized capacity of brown adipose tissue and beige fat that participates in non-shivering adaptive thermogenesis to temperature and diet variations and more generally to the regulation of energy balance. Functions as a long-chain fatty acid/LCFA and proton symporter, simultaneously transporting one LCFA and one proton through the inner mitochondrial membrane. However, LCFAs remaining associated with the transporter via their hydrophobic tails, it results in an apparent transport of protons activated by LCFAs. Thereby, dissipates the mitochondrial proton gradient and converts the energy of substrate oxydation into heat instead of ATP. Regulates the production of reactive oxygen species/ROS by mitochondria. The sequence is that of Mitochondrial brown fat uncoupling protein 1 from Canis lupus familiaris (Dog).